The following is a 950-amino-acid chain: Glycine dehydrogenase (decarboxylating) 1 (950 aa).

Lys704 is subject to N6-(pyridoxal phosphate)lysine.

It belongs to the GcvP family. In terms of assembly, the glycine cleavage system is composed of four proteins: P, T, L and H. The cofactor is pyridoxal 5'-phosphate.

The catalysed reaction is N(6)-[(R)-lipoyl]-L-lysyl-[glycine-cleavage complex H protein] + glycine + H(+) = N(6)-[(R)-S(8)-aminomethyldihydrolipoyl]-L-lysyl-[glycine-cleavage complex H protein] + CO2. The glycine cleavage system catalyzes the degradation of glycine. The P protein binds the alpha-amino group of glycine through its pyridoxal phosphate cofactor; CO(2) is released and the remaining methylamine moiety is then transferred to the lipoamide cofactor of the H protein. The chain is Glycine dehydrogenase (decarboxylating) 1 from Pseudomonas fluorescens (strain Pf0-1).